We begin with the raw amino-acid sequence, 196 residues long: Pyridoxal 5'-phosphate synthase subunit PdxT (196 aa).

52–54 (GES) is a binding site for L-glutamine. The active-site Nucleophile is the Cys84. Residues Arg113 and 141–142 (IR) contribute to the L-glutamine site. Catalysis depends on charge relay system residues His178 and Glu180.

This sequence belongs to the glutaminase PdxT/SNO family. As to quaternary structure, in the presence of PdxS, forms a dodecamer of heterodimers. Only shows activity in the heterodimer.

The catalysed reaction is aldehydo-D-ribose 5-phosphate + D-glyceraldehyde 3-phosphate + L-glutamine = pyridoxal 5'-phosphate + L-glutamate + phosphate + 3 H2O + H(+). It catalyses the reaction L-glutamine + H2O = L-glutamate + NH4(+). It participates in cofactor biosynthesis; pyridoxal 5'-phosphate biosynthesis. In terms of biological role, catalyzes the hydrolysis of glutamine to glutamate and ammonia as part of the biosynthesis of pyridoxal 5'-phosphate. The resulting ammonia molecule is channeled to the active site of PdxS. In Pyrococcus horikoshii (strain ATCC 700860 / DSM 12428 / JCM 9974 / NBRC 100139 / OT-3), this protein is Pyridoxal 5'-phosphate synthase subunit PdxT.